Here is a 489-residue protein sequence, read N- to C-terminus: MTAQSAQPLYIGGRPVDATSGETFTVTNPYDGSLLATIGQASQADVDSAVQAAQRGQREWAAMTGMERSRILLRAVALLRERNDELAELETRNTGKPISETASVDIVTGADALEYYAGLAPAIEGSQIPLRDTRLVYTRREPLGVIGAIGAWNYPIQIACWKAAPALAAGNAIVFKPSEVTPLTALKLAEIFTEAGLPDGVFNVVQGDGRVGAMLTEHEGIAKVSFTGEVGTGKKVMAAAGGSTLKDVTMELGGKSPLIVFADADLDRAADAAMMANFYSSGQICTNGTRVFVERSAKEAFEAKLVERVARIKAGDPMDPSVNFGPLVSFEHQEKVLSYIALGKEQGARVLAGGDAWNSGEWAKGAWAAPTVFTDCTDEMRVVKEEIFGPVMSVLAFDDEEEVIRRANNTKYGLAAGVFSESLNRAHRVIHQLEAGICWINTWGESPSEMPVGGYKESGIGRENGVETLNHYTQTKSVQIEMGPFESVF.

Asparagine 93 serves as a coordination point for K(+). Residue glycine 150–tryptophan 152 coordinates NAD(+). Lysine 162 functions as the Charge relay system in the catalytic mechanism. NAD(+) is bound at residue lysine 176–glutamate 179. Valine 180 is a binding site for K(+). Glutamate 229–threonine 232 serves as a coordination point for NAD(+). Leucine 245 is a K(+) binding site. The active-site Proton acceptor is the glutamate 251. The NAD(+) site is built by glycine 253, cysteine 285, and glutamate 386. The active-site Nucleophile is the cysteine 285. Residue cysteine 285 is modified to Cysteine sulfenic acid (-SOH). K(+)-binding residues include lysine 456 and glycine 459. The active-site Charge relay system is glutamate 463.

Belongs to the aldehyde dehydrogenase family. As to quaternary structure, dimer of dimers. The cofactor is K(+).

It carries out the reaction betaine aldehyde + NAD(+) + H2O = glycine betaine + NADH + 2 H(+). It functions in the pathway amine and polyamine biosynthesis; betaine biosynthesis via choline pathway; betaine from betaine aldehyde: step 1/1. Involved in the biosynthesis of the osmoprotectant glycine betaine. Catalyzes the irreversible oxidation of betaine aldehyde to the corresponding acid. In Chromohalobacter salexigens (strain ATCC BAA-138 / DSM 3043 / CIP 106854 / NCIMB 13768 / 1H11), this protein is Betaine aldehyde dehydrogenase.